The following is a 493-amino-acid chain: Acetylcholine receptor subunit beta (493 aa).

The signal sequence occupies residues 1–24; that stretch reads MENVRRMALGLVVMMALALSGVGA. Topologically, residues 25–240 are extracellular; that stretch reads SVMEDTLLSV…VTFYLIIQRK (216 aa). Cys-152 and Cys-166 are joined by a disulfide. N-linked (GlcNAc...) asparagine glycosylation is present at Asn-165. A run of 3 helical transmembrane segments spans residues 241 to 265, 273 to 291, and 307 to 328; these read PLFY…VFYL, MSLS…LLLA, and YLMF…VLNL. Topologically, residues 329–461 are cytoplasmic; the sequence is HHRSPNTHTM…WQYVAMVADR (133 aa). The residue at position 379 (Tyr-379) is a Phosphotyrosine; by Tyr-kinases. A helical transmembrane segment spans residues 462 to 480; sequence LFLYVFFVICSIGTFSIFL.

It belongs to the ligand-gated ion channel (TC 1.A.9) family. Acetylcholine receptor (TC 1.A.9.1) subfamily. Beta-1/CHRNB1 sub-subfamily. In terms of assembly, pentamer of two alpha chains, and one each of the beta, delta, and gamma chains.

The protein localises to the postsynaptic cell membrane. The protein resides in the cell membrane. The enzyme catalyses K(+)(in) = K(+)(out). It carries out the reaction Na(+)(in) = Na(+)(out). Its function is as follows. After binding acetylcholine, the AChR responds by an extensive change in conformation that affects all subunits and leads to opening of an ion-conducting channel across the plasma membrane. This is Acetylcholine receptor subunit beta (CHRNB1) from Tetronarce californica (Pacific electric ray).